A 74-amino-acid polypeptide reads, in one-letter code: Sec-independent protein translocase protein TatA (74 aa).

Residues 1–21 (MGSIGMTELLLIFGIIVLLFG) form a helical membrane-spanning segment.

Belongs to the TatA/E family. Forms a complex with TatC.

It is found in the cell inner membrane. In terms of biological role, part of the twin-arginine translocation (Tat) system that transports large folded proteins containing a characteristic twin-arginine motif in their signal peptide across membranes. TatA could form the protein-conducting channel of the Tat system. This Sulfurihydrogenibium sp. (strain YO3AOP1) protein is Sec-independent protein translocase protein TatA.